We begin with the raw amino-acid sequence, 346 residues long: Histone PARylation factor 1 (346 aa).

M1 bears the N-acetylmethionine mark. The span at 1-10 (MVGGGAKRRL) shows a compositional bias: basic residues. The tract at residues 1–29 (MVGGGAKRRLRGEGPQCEKPVDMKKSKSC) is disordered. N6-acetyllysine is present on K19. Residues 19 to 29 (KPVDMKKSKSC) show a composition bias toward basic and acidic residues. S97 carries the ADP-ribosylserine modification. K186 and K233 each carry N6-acetyllysine. At D235 the chain carries PolyADP-ribosyl aspartic acid. Y238 bears the ADP-ribosyltyrosine mark. E240 is subject to PolyADP-ribosyl glutamic acid. Residues 242–346 (PETDASLRRI…SQDDVDQLAA (105 aa)) are interaction with PARP1. The active-site Proton donor is E284.

It belongs to the HPF1 family. Interacts with PARP1 (via the PARP catalytic domain). Interacts with PARP2 (via the PARP catalytic domain). Interacts with core nucleosomes in a PARP1- and PARP2-dependent manner.

The protein resides in the chromosome. It localises to the nucleus. Cofactor for serine ADP-ribosylation that confers serine specificity on PARP1 and PARP2 and plays a key role in DNA damage response. Initiates the repair of double-strand DNA breaks: recruited to DNA damage sites by PARP1 and PARP2 and switches the amino acid specificity of PARP1 and PARP2 from aspartate or glutamate to serine residues, licensing serine ADP-ribosylation of target proteins. Serine ADP-ribosylation of target proteins, such as histones, promotes decompaction of chromatin and the recruitment of repair factors leading to the reparation of DNA strand breaks. Serine ADP-ribosylation of proteins constitutes the primary form of ADP-ribosylation of proteins in response to DNA damage. HPF1 acts by completing the active site of PARP1 and PARP2: forms a composite active site composed of residues from HPF1 and PARP1 or PARP2. While HPF1 promotes the initiation of serine ADP-ribosylation, it restricts the polymerase activity of PARP1 and PARP2 in order to limit the length of poly-ADP-ribose chains. HPF1 also promotes tyrosine ADP-ribosylation, probably by conferring tyrosine specificity on PARP1. The chain is Histone PARylation factor 1 from Bos taurus (Bovine).